Here is a 131-residue protein sequence, read N- to C-terminus: Large-conductance mechanosensitive channel (131 aa).

A run of 3 helical transmembrane segments spans residues 8–28 (FAVR…GAFG), 30–50 (IVSS…LGGI), and 67–87 (GAFL…FLFV).

The protein belongs to the MscL family. In terms of assembly, homopentamer.

The protein localises to the cell membrane. Functionally, channel that opens in response to stretch forces in the membrane lipid bilayer. May participate in the regulation of osmotic pressure changes within the cell. The chain is Large-conductance mechanosensitive channel from Anoxybacillus flavithermus (strain DSM 21510 / WK1).